A 609-amino-acid polypeptide reads, in one-letter code: Proteasome-associated ATPase (609 aa).

The tract at residues 1–24 (MADSERSEAFGTPDDTPLSSNDAA) is disordered. The stretch at 19–96 (SSNDAAELEQ…LREEVDRLGQ (78 aa)) forms a coiled coil. 296 to 301 (GCGKTL) contributes to the ATP binding site. The tract at residues 608–609 (YL) is docks into pockets in the proteasome alpha-ring.

It belongs to the AAA ATPase family. Homohexamer. Assembles into a hexameric ring structure that caps the 20S proteasome core. Strongly interacts with the prokaryotic ubiquitin-like protein Pup through a hydrophobic interface; the interacting region of ARC lies in its N-terminal coiled-coil domain. There is one Pup binding site per ARC hexamer ring. Upon ATP-binding, the C-terminus of ARC interacts with the alpha-rings of the proteasome core, possibly by binding to the intersubunit pockets.

The protein operates within protein degradation; proteasomal Pup-dependent pathway. Its function is as follows. ATPase which is responsible for recognizing, binding, unfolding and translocation of pupylated proteins into the bacterial 20S proteasome core particle. May be essential for opening the gate of the 20S proteasome via an interaction with its C-terminus, thereby allowing substrate entry and access to the site of proteolysis. Thus, the C-termini of the proteasomal ATPase may function like a 'key in a lock' to induce gate opening and therefore regulate proteolysis. This chain is Proteasome-associated ATPase, found in Mycobacterium ulcerans (strain Agy99).